The following is a 151-amino-acid chain: Deoxyuridine 5'-triphosphate nucleotidohydrolase (151 aa).

Residues 70–72 (RSG), N83, 87–89 (LID), and M97 contribute to the substrate site.

Belongs to the dUTPase family. Mg(2+) is required as a cofactor.

It catalyses the reaction dUTP + H2O = dUMP + diphosphate + H(+). It functions in the pathway pyrimidine metabolism; dUMP biosynthesis; dUMP from dCTP (dUTP route): step 2/2. Its function is as follows. This enzyme is involved in nucleotide metabolism: it produces dUMP, the immediate precursor of thymidine nucleotides and it decreases the intracellular concentration of dUTP so that uracil cannot be incorporated into DNA. The chain is Deoxyuridine 5'-triphosphate nucleotidohydrolase from Actinobacillus pleuropneumoniae serotype 5b (strain L20).